Reading from the N-terminus, the 100-residue chain is Protein translation factor SUI1 homolog (100 aa).

Belongs to the SUI1 family.

This Thermoplasma volcanium (strain ATCC 51530 / DSM 4299 / JCM 9571 / NBRC 15438 / GSS1) protein is Protein translation factor SUI1 homolog.